The chain runs to 1158 residues: Formin-C (1158 aa).

Disordered stretches follow at residues isoleucine 8–serine 29, proline 417–leucine 523, and isoleucine 990–glutamine 1052. The GBD/FH3 domain occupies glutamine 20 to isoleucine 388. The span at proline 417 to aspartate 437 shows a compositional bias: polar residues. Positions threonine 438–leucine 481 are enriched in low complexity. Positions leucine 479–threonine 515 form a coiled coil. The span at glutamine 482–glutamine 503 shows a compositional bias: basic and acidic residues. The 398-residue stretch at threonine 601–asparagine 998 folds into the FH2 domain. Positions serine 1134–phenylalanine 1158 constitute a DAD domain.

It belongs to the formin homology family. Diaphanous subfamily. In terms of assembly, interacts (via GBD/FH3 domain) with activated Rho-GTPases.

It is found in the cytoplasm. The protein localises to the cytosol. It localises to the cytoskeleton. Formins play an important role in the nucleation of actin and the formation of linear actin filaments. This chain is Formin-C (forC), found in Dictyostelium discoideum (Social amoeba).